A 388-amino-acid polypeptide reads, in one-letter code: Chaperone protein DnaJ (388 aa).

One can recognise a J domain in the interval 5 to 69 (DYYDVLGVDK…QKKAQYDQFG (65 aa)). The segment at 145–227 (GKKTDITYTR…CHGKGTIDKK (83 aa)) adopts a CR-type zinc-finger fold. Zn(2+) contacts are provided by cysteine 158, cysteine 161, cysteine 175, cysteine 178, cysteine 201, cysteine 204, cysteine 215, and cysteine 218. CXXCXGXG motif repeat units follow at residues 158-165 (CPTCDGSG), 175-182 (CDKCHGTG), 201-208 (CDKCGGRG), and 215-222 (CQTCHGKG).

It belongs to the DnaJ family. As to quaternary structure, homodimer. Zn(2+) serves as cofactor.

It localises to the cytoplasm. In terms of biological role, participates actively in the response to hyperosmotic and heat shock by preventing the aggregation of stress-denatured proteins and by disaggregating proteins, also in an autonomous, DnaK-independent fashion. Unfolded proteins bind initially to DnaJ; upon interaction with the DnaJ-bound protein, DnaK hydrolyzes its bound ATP, resulting in the formation of a stable complex. GrpE releases ADP from DnaK; ATP binding to DnaK triggers the release of the substrate protein, thus completing the reaction cycle. Several rounds of ATP-dependent interactions between DnaJ, DnaK and GrpE are required for fully efficient folding. Also involved, together with DnaK and GrpE, in the DNA replication of plasmids through activation of initiation proteins. This Lactobacillus gasseri (strain ATCC 33323 / DSM 20243 / BCRC 14619 / CIP 102991 / JCM 1131 / KCTC 3163 / NCIMB 11718 / NCTC 13722 / AM63) protein is Chaperone protein DnaJ.